We begin with the raw amino-acid sequence, 294 residues long: 33 kDa chaperonin (294 aa).

Cystine bridges form between C239/C241 and C272/C275.

The protein belongs to the HSP33 family. Under oxidizing conditions two disulfide bonds are formed involving the reactive cysteines. Under reducing conditions zinc is bound to the reactive cysteines and the protein is inactive.

It localises to the cytoplasm. Its function is as follows. Redox regulated molecular chaperone. Protects both thermally unfolding and oxidatively damaged proteins from irreversible aggregation. Plays an important role in the bacterial defense system toward oxidative stress. The polypeptide is 33 kDa chaperonin (Listeria monocytogenes serovar 1/2a (strain ATCC BAA-679 / EGD-e)).